The following is a 306-amino-acid chain: Pantothenate kinase (306 aa).

91 to 98 (GSVAVGKS) is a binding site for ATP.

Belongs to the prokaryotic pantothenate kinase family.

The protein localises to the cytoplasm. The catalysed reaction is (R)-pantothenate + ATP = (R)-4'-phosphopantothenate + ADP + H(+). It functions in the pathway cofactor biosynthesis; coenzyme A biosynthesis; CoA from (R)-pantothenate: step 1/5. The polypeptide is Pantothenate kinase (Streptococcus pneumoniae (strain 70585)).